A 544-amino-acid polypeptide reads, in one-letter code: Chaperonin GroEL (544 aa).

ATP-binding positions include 30 to 33, 87 to 91, G414, 478 to 480, and D494; these read TLGP, DGTTT, and NAL.

It belongs to the chaperonin (HSP60) family. In terms of assembly, forms a cylinder of 14 subunits composed of two heptameric rings stacked back-to-back. Interacts with the co-chaperonin GroES.

The protein resides in the cytoplasm. It catalyses the reaction ATP + H2O + a folded polypeptide = ADP + phosphate + an unfolded polypeptide.. Its function is as follows. Together with its co-chaperonin GroES, plays an essential role in assisting protein folding. The GroEL-GroES system forms a nano-cage that allows encapsulation of the non-native substrate proteins and provides a physical environment optimized to promote and accelerate protein folding. The protein is Chaperonin GroEL of Pelotomaculum thermopropionicum (strain DSM 13744 / JCM 10971 / SI).